The sequence spans 168 residues: D-aminoacyl-tRNA deacylase 2 (168 aa).

The short motif at 160-161 (GP) is the Gly-transPro motif, allows the protein to recognize chirality of D-amino acids element.

This sequence belongs to the DTD family. Homodimer.

The protein resides in the cytoplasm. It carries out the reaction a D-aminoacyl-tRNA + H2O = a tRNA + a D-alpha-amino acid + H(+). The catalysed reaction is glycyl-tRNA(Ala) + H2O = tRNA(Ala) + glycine + H(+). It catalyses the reaction D-tyrosyl-tRNA(Tyr) + H2O = D-tyrosine + tRNA(Tyr). The enzyme catalyses L-alanyl-tRNA(Thr) + H2O = tRNA(Thr) + L-alanine + H(+). Its function is as follows. Deacylates mischarged D-aminoacyl-tRNAs. Also deacylates mischarged glycyl-tRNA(Ala), protecting cells against glycine mischarging by AlaRS. Probably acts by rejecting L-amino acids from its binding site rather than specific recognition of D-amino acids. Catalyzes the hydrolysis of D-tyrosyl-tRNA(Tyr), has no activity on correctly charged L-tyrosyl-tRNA(Tyr). By recycling D-aminoacyl-tRNA to D-amino acids and free tRNA molecules, this enzyme counteracts the toxicity associated with the formation of D-aminoacyl-tRNA entities in vivo and helps enforce protein L-homochirality. In contrast to DTD1, deacylates L-Ala mischarged on tRNA(Thr)(G4.U69) by alanine-tRNA ligase AARS. Can deacylate L-Ala due to a relaxed specificity for substrate chirality caused by the trans conformation of the Gly-Pro motif in the active site. Also hydrolyzes correctly charged, achiral, glycyl-tRNA(Gly) in vitro, although in vivo EEF1A1/EF-Tu may protect cognate achiral glycyl-tRNA(Gly) from DTD2-mediated deacetylation. In Homo sapiens (Human), this protein is D-aminoacyl-tRNA deacylase 2 (DTD2).